Consider the following 175-residue polypeptide: Putative adenylate cyclase MJ0240 (175 aa).

The region spanning 1–175 (MIEVEIKVKI…RKSYLELRGL (175 aa)) is the CYTH domain. Tyrosine 37 serves as the catalytic Proton acceptor.

It belongs to the adenylyl cyclase CyaB family.

It localises to the cytoplasm. The catalysed reaction is ATP = 3',5'-cyclic AMP + diphosphate. Its function is as follows. Could catalyze the biosynthesis of cyclic AMP (cAMP) from ATP. In Methanocaldococcus jannaschii (strain ATCC 43067 / DSM 2661 / JAL-1 / JCM 10045 / NBRC 100440) (Methanococcus jannaschii), this protein is Putative adenylate cyclase MJ0240.